We begin with the raw amino-acid sequence, 270 residues long: Cross-pathway control protein 1 (270 aa).

2 disordered regions span residues 114 to 135 (QAQA…QTQP) and 153 to 213 (QTVH…IIVE). Low complexity predominate over residues 184-195 (SVSPPSGRHSSV). The 55-residue stretch at 216 to 270 (SDVVAMKRARNTLAARKSRERKAQRLEELEAKIEELIAERDRWKNLALAHGASTE) folds into the bZIP domain. Positions 222–240 (KRARNTLAARKSRERKAQR) are basic motif. The leucine-zipper stretch occupies residues 241–248 (LEELEAKI).

This sequence belongs to the bZIP family. GCN4 subfamily. As to quaternary structure, binds DNA as a dimer.

The protein resides in the nucleus. Its function is as follows. In N.crassa grown under amino acid starvation conditions, this protein is required for increasing the transcription of the genes coding for many amino acid biosynthetic pathways enzymes. This transcription factor binds and recognize the DNA sequence: 5'-TGACTC-3'. This is Cross-pathway control protein 1 (cpc-1) from Neurospora crassa (strain ATCC 24698 / 74-OR23-1A / CBS 708.71 / DSM 1257 / FGSC 987).